A 202-amino-acid chain; its full sequence is Nitrophorin-3 (202 aa).

Residues 1-23 form the signal peptide; sequence MEPYSALLAVTILCLTSTMGVSG. 2 disulfides stabilise this stretch: C25–C144 and C62–C193. H80 lines the heme pocket.

Belongs to the calycin superfamily. Nitrophorin family. Interacts weakly with host coagulation factor IX (F9) (inactive and activated) in the presence of Ca(2+). In terms of tissue distribution, salivary gland (at protein level).

The protein resides in the secreted. Heme-based protein that deliver nitric oxide gas (NO) to the victim while feeding, resulting in vasodilation and inhibition of platelet aggregation. Reversibly binds nitric oxide (NO). Also binds tightly to histamine, which is released by the host to induce wound healing. Exhibits weak anticoagulant activity. This chain is Nitrophorin-3, found in Rhodnius prolixus (Triatomid bug).